We begin with the raw amino-acid sequence, 162 residues long: Transcription elongation factor GreA (162 aa).

The stretch at 48 to 76 (NSEYQSAKDEQAFVEGRVKQLQQMIQFAQ) forms a coiled coil. The segment at 111–132 (GSAESDPLSGKISNDSPMGKAL) is disordered.

This sequence belongs to the GreA/GreB family.

Functionally, necessary for efficient RNA polymerase transcription elongation past template-encoded arresting sites. The arresting sites in DNA have the property of trapping a certain fraction of elongating RNA polymerases that pass through, resulting in locked ternary complexes. Cleavage of the nascent transcript by cleavage factors such as GreA or GreB allows the resumption of elongation from the new 3'terminus. GreA releases sequences of 2 to 3 nucleotides. The protein is Transcription elongation factor GreA of Oenococcus oeni (strain ATCC BAA-331 / PSU-1).